Here is a 570-residue protein sequence, read N- to C-terminus: Spastin (570 aa).

At 1 to 35 (MNSGHKARLRGGRACGPVSDGSARGNRLLFYTRSL) the chain is on the cytoplasmic side. Residues 36–52 (SRVPEWLLRVLLLLLRW) constitute an intramembrane region (helical). The Cytoplasmic portion of the chain corresponds to 53-570 (LFQPIRRAMA…NREYGDTTGV (518 aa)). In terms of domain architecture, MIT spans 83–158 (YHKQAFEFIS…SMAEDRLKLL (76 aa)). The segment at 186–269 (APASGAVSKK…SPQRKRDMKN (84 aa)) is disordered. Polar residues-rich tracts occupy residues 199–208 (LTITNQTSLR), 216–242 (TPNA…NQKG), and 251–261 (VKASTTATASP). 335 to 342 (GPPGNGKT) lines the ATP pocket.

It belongs to the AAA ATPase family. Spastin subfamily. As to quaternary structure, homohexamer. The homohexamer is stabilized by ATP-binding. The homohexamer may adopt a ring conformation through which microtubules pass prior to being severed. Interacts with microtubules.

The protein localises to the membrane. It localises to the cytoplasm. It is found in the cytoskeleton. The protein resides in the microtubule organizing center. Its subcellular location is the centrosome. The protein localises to the perinuclear region. It localises to the nucleus. The catalysed reaction is n ATP + n H2O + a microtubule = n ADP + n phosphate + (n+1) alpha/beta tubulin heterodimers.. In terms of biological role, ATP-dependent microtubule severing protein that specifically recognizes and cuts microtubules that are polyglutamylated. Preferentially recognizes and acts on microtubules decorated with short polyglutamate tails: severing activity increases as the number of glutamates per tubulin rises from one to eight, but decreases beyond this glutamylation threshold. Microtubule severing promotes reorganization of cellular microtubule arrays and the release of microtubules from the centrosome following nucleation. Required for membrane traffic from the endoplasmic reticulum (ER) to the Golgi and for completion of the abscission stage of cytokinesis. Also plays a role in axon growth and the formation of axonal branches. In Danio rerio (Zebrafish), this protein is Spastin.